A 440-amino-acid chain; its full sequence is Transposon Ty1-DR2 Gag polyprotein (440 aa).

Polar residues-rich tracts occupy residues 1-31 and 137-168; these read MESQ…TTQD and VGTH…TNQH. Disordered regions lie at residues 1 to 75, 137 to 174, and 350 to 440; these read MESQ…PQAA, VGTH…PPPI, and QQES…PGTY. An RNA-binding region spans residues 299-401; sequence NNGIPINNKV…NSQSRTARAH (103 aa). Over residues 363–372 the composition is skewed to basic and acidic residues; it reads SPSDEKKDSR. Residues 373–409 are compositionally biased toward polar residues; that stretch reads TYTNTTKPKSITRNSQKPNNSQSRTARAHNVSTSNNF. A compositionally biased stretch (basic and acidic residues) spans 429–440; it reads NKHDLHLRPGTY.

As to quaternary structure, homotrimer.

The protein resides in the cytoplasm. In terms of biological role, capsid protein (CA) is the structural component of the virus-like particle (VLP), forming the shell that encapsulates the retrotransposons dimeric RNA genome. The particles are assembled from trimer-clustered units and there are holes in the capsid shells that allow for the diffusion of macromolecules. CA also has nucleocapsid-like chaperone activity, promoting primer tRNA(i)-Met annealing to the multipartite primer-binding site (PBS), dimerization of Ty1 RNA and initiation of reverse transcription. The polypeptide is Transposon Ty1-DR2 Gag polyprotein (TY1A-DR2) (Saccharomyces cerevisiae (strain ATCC 204508 / S288c) (Baker's yeast)).